The following is a 485-amino-acid chain: Chitin synthase regulator 2 (485 aa).

Sel1-like repeat units lie at residues 164–202, 203–238, 239–275, 279–316, 317–353, 354–391, and 392–427; these read PDAQ…KHGH, PDAC…VGLH, PGAM…EHAT, PHAL…ELGY, APSA…QQDH, KDAC…ELGL, and AKAQ…EGGD. The segment at 460-485 is disordered; the sequence is AANLAQRSGSGSGASGKDGKDGCLIM. Residues 476–485 are compositionally biased toward basic and acidic residues; sequence KDGKDGCLIM. Residue Cys482 is modified to Cysteine methyl ester. A lipid anchor (S-farnesyl cysteine) is attached at Cys482. Positions 483–485 are cleaved as a propeptide — removed in mature form; sequence LIM.

This sequence belongs to the SKT5 family.

The protein localises to the cell membrane. Functionally, activator of the chitin synthase CHS3 which polymerizes chitin, a structural polymer of the fungal cell wall. Chitin produced by CHS3 is deacetylated to chitosan, which helps to maintain cell wall integrity, anchor melanin, and offers an advantage during infection, as chitosan is less readily detected by host immunosurveillance. The polypeptide is Chitin synthase regulator 2 (Cryptococcus neoformans var. grubii serotype A (strain H99 / ATCC 208821 / CBS 10515 / FGSC 9487) (Filobasidiella neoformans var. grubii)).